Consider the following 187-residue polypeptide: MPNQEKMEKAIYQFLEALGENPNREGLKDTPKRVAKMYIEMFSGLNQDPKEQFTAVFSENHEEVVIVKDIPFYSMCEHHLVPFYGKAHIAYLPNDGRVTGLSKLARAVEVASKRPQLQERLTAQVAQALEDALAPKGIFVMIEAEHMCMTMRGIKKPGSKTITTVARGLYKDDRYERQEILSLIQKG.

Positions 76, 79, and 148 each coordinate Zn(2+).

Belongs to the GTP cyclohydrolase I family. Toroid-shaped homodecamer, composed of two pentamers of five dimers.

It carries out the reaction GTP + H2O = 7,8-dihydroneopterin 3'-triphosphate + formate + H(+). It participates in cofactor biosynthesis; 7,8-dihydroneopterin triphosphate biosynthesis; 7,8-dihydroneopterin triphosphate from GTP: step 1/1. This Streptococcus agalactiae serotype V (strain ATCC BAA-611 / 2603 V/R) protein is GTP cyclohydrolase 1.